The sequence spans 94 residues: Pyrimidine/purine nucleoside phosphorylase (94 aa).

The protein belongs to the nucleoside phosphorylase PpnP family.

The catalysed reaction is a purine D-ribonucleoside + phosphate = a purine nucleobase + alpha-D-ribose 1-phosphate. It catalyses the reaction adenosine + phosphate = alpha-D-ribose 1-phosphate + adenine. The enzyme catalyses cytidine + phosphate = cytosine + alpha-D-ribose 1-phosphate. It carries out the reaction guanosine + phosphate = alpha-D-ribose 1-phosphate + guanine. The catalysed reaction is inosine + phosphate = alpha-D-ribose 1-phosphate + hypoxanthine. It catalyses the reaction thymidine + phosphate = 2-deoxy-alpha-D-ribose 1-phosphate + thymine. The enzyme catalyses uridine + phosphate = alpha-D-ribose 1-phosphate + uracil. It carries out the reaction xanthosine + phosphate = alpha-D-ribose 1-phosphate + xanthine. Functionally, catalyzes the phosphorolysis of diverse nucleosides, yielding D-ribose 1-phosphate and the respective free bases. Can use uridine, adenosine, guanosine, cytidine, thymidine, inosine and xanthosine as substrates. Also catalyzes the reverse reactions. The chain is Pyrimidine/purine nucleoside phosphorylase from Saccharophagus degradans (strain 2-40 / ATCC 43961 / DSM 17024).